The primary structure comprises 639 residues: DNA gyrase subunit B (639 aa).

Residues 392 to 402 show a composition bias toward basic and acidic residues; sequence QAEELTRRKSA. Residues 392-416 form a disordered region; the sequence is QAEELTRRKSALESTSLPGKLADCQ. The Toprim domain occupies 423–537; sequence SELFIVEGDS…AGYVYAAQPP (115 aa). The Mg(2+) site is built by Glu429, Asp502, and Asp504. Lys624 is covalently cross-linked (Glycyl lysine isopeptide (Lys-Gly) (interchain with G-Cter in SAMP2)).

The protein belongs to the type II topoisomerase GyrB family. Heterotetramer, composed of two GyrA and two GyrB chains. In the heterotetramer, GyrA contains the active site tyrosine that forms a transient covalent intermediate with DNA, while GyrB binds cofactors and catalyzes ATP hydrolysis. Mg(2+) serves as cofactor. Mn(2+) is required as a cofactor. Requires Ca(2+) as cofactor.

The protein localises to the cytoplasm. It catalyses the reaction ATP-dependent breakage, passage and rejoining of double-stranded DNA.. Functionally, a type II topoisomerase that negatively supercoils closed circular double-stranded (ds) DNA in an ATP-dependent manner to modulate DNA topology and maintain chromosomes in an underwound state. Negative supercoiling favors strand separation, and DNA replication, transcription, recombination and repair, all of which involve strand separation. Also able to catalyze the interconversion of other topological isomers of dsDNA rings, including catenanes and knotted rings. Type II topoisomerases break and join 2 DNA strands simultaneously in an ATP-dependent manner. The protein is DNA gyrase subunit B of Haloferax volcanii (strain ATCC 29605 / DSM 3757 / JCM 8879 / NBRC 14742 / NCIMB 2012 / VKM B-1768 / DS2) (Halobacterium volcanii).